We begin with the raw amino-acid sequence, 457 residues long: Keratin, type II cytoskeletal 7 (457 aa).

The residue at position 2 (S2) is an N-acetylserine. At S2 the chain carries Phosphoserine. A head region spans residues 2–84; that stretch reads SIHFSSRSTA…DPTIQQVRQE (83 aa). Residue S7 is glycosylated (O-linked (GlcNAc) serine). The residue at position 15 (R15) is a Dimethylated arginine; alternate. R15 carries the omega-N-methylarginine; alternate modification. Residues S47 and S65 each carry the phosphoserine modification. Positions 84 to 120 are coil 1A; it reads EEREQIKTLNNKFASFIDKVRFLEQQNKMLETKWALL. The IF rod domain maps to 85–397; it reads EREQIKTLNN…KLLEGEESRL (313 aa). T91 is subject to Phosphothreonine. Positions 121–138 are linker 1; that stretch reads QEQKSAKSSQLPRIFEAQ. A Glycyl lysine isopeptide (Lys-Gly) (interchain with G-Cter in SUMO2) cross-link involves residue K124. Residues 139-230 form a coil 1B region; it reads IAGLRQQLET…TLHETELAEL (92 aa). Residue K173 is modified to N6-acetyllysine. Residues S211, S246, and S248 each carry the phosphoserine modification. Residues 231-254 are linker 12; it reads QSQISDTSVVLSMDNSRSLDLDGI. The segment at 255-393 is coil 2; that stretch reads IADVKAQYEE…ATYRKLLEGE (139 aa). Residues K259 and K280 each participate in a glycyl lysine isopeptide (Lys-Gly) (interchain with G-Cter in SUMO2) cross-link. T283 is modified (phosphothreonine). Residues K290 and K325 each participate in a glycyl lysine isopeptide (Lys-Gly) (interchain with G-Cter in SUMO2) cross-link. Residues 394 to 457 are tail; sequence ESRLSGDGMG…TSTTRRGTHN (64 aa).

It belongs to the intermediate filament family. In terms of assembly, heterotetramer of two type I and two type II keratins. Interacts with eukaryotic translation initiator factor 3 (eIF3) subunit EIF3S10. Interacts with GPER1. Arg-15 is dimethylated, probably to asymmetric dimethylarginine. As to expression, expressed in most simple epithelia tested including liver, lactating mammary gland, lung, kidney, stomach, duodenum, colon, oviduct, uterus, pancreas, epididymis, prostate, preputial gland and mesothelium, and in most stratified epithelia tested including dorsal skin, paw/toe, tail, tongue, cervix, forestomach, and bladder. Also expressed in Henle layer of the inner root sheath of whisker follicle.

Functionally, blocks interferon-dependent interphase and stimulates DNA synthesis in cells. This Mus musculus (Mouse) protein is Keratin, type II cytoskeletal 7.